Reading from the N-terminus, the 118-residue chain is UPF0145 protein PTO0347 (118 aa).

Belongs to the UPF0145 family.

The chain is UPF0145 protein PTO0347 from Picrophilus torridus (strain ATCC 700027 / DSM 9790 / JCM 10055 / NBRC 100828 / KAW 2/3).